Consider the following 236-residue polypeptide: Purine nucleoside phosphorylase CA_C1699 (236 aa).

Residues His62, Cys97, and His114 each coordinate Zn(2+).

It belongs to the purine nucleoside phosphorylase YfiH/LACC1 family. Homodimer. Cu(2+) serves as cofactor. The cofactor is Zn(2+).

The catalysed reaction is adenosine + phosphate = alpha-D-ribose 1-phosphate + adenine. It catalyses the reaction S-methyl-5'-thioadenosine + phosphate = 5-(methylsulfanyl)-alpha-D-ribose 1-phosphate + adenine. The enzyme catalyses inosine + phosphate = alpha-D-ribose 1-phosphate + hypoxanthine. It carries out the reaction adenosine + H2O + H(+) = inosine + NH4(+). Functionally, purine nucleoside enzyme that catalyzes the phosphorolysis of adenosine and inosine nucleosides, yielding D-ribose 1-phosphate and the respective free bases, adenine and hypoxanthine. Also catalyzes the phosphorolysis of S-methyl-5'-thioadenosine into adenine and S-methyl-5-thio-alpha-D-ribose 1-phosphate. Also has adenosine deaminase activity. This Clostridium acetobutylicum (strain ATCC 824 / DSM 792 / JCM 1419 / IAM 19013 / LMG 5710 / NBRC 13948 / NRRL B-527 / VKM B-1787 / 2291 / W) protein is Purine nucleoside phosphorylase CA_C1699.